Here is a 642-residue protein sequence, read N- to C-terminus: Kinesin-like protein KIN-7L (642 aa).

Positions 3–337 (KISVAVRFRP…LQFASRAKCV (335 aa)) constitute a Kinesin motor domain. Low complexity predominate over residues 12–27 (PPTTAAPAADQSPSST). A disordered region spans residues 12–33 (PPTTAAPAADQSPSSTGGDREW). 94–101 (GQTSSGKT) contacts ATP. 2 coiled-coil regions span residues 343–428 (VNEI…SNTS) and 540–612 (RQQL…FSQA).

It belongs to the TRAFAC class myosin-kinesin ATPase superfamily. Kinesin family. KIN-7 subfamily.

This chain is Kinesin-like protein KIN-7L, found in Oryza sativa subsp. japonica (Rice).